The chain runs to 513 residues: Pleiotropic regulator 1 (513 aa).

Residue M1 is modified to N-acetylmethionine. Positions 60–79 (TSKENLKEKGPQNATDSYPH) are disordered. Residue S119 is modified to Phosphoserine. Residues 136–160 (VDANRTGPAGSEYRHPGASDRSQPT) are disordered. S200 bears the Phosphoserine mark. 7 WD repeats span residues 201–240 (GHLG…LKLS), 243–282 (GHIS…VIRH), 285–324 (GHLS…SVHT), 327–366 (GHTN…TRVT), 369–409 (NHKK…QNLS), 410–448 (GHNA…NFQR), and 459–498 (DSES…TEET). S390 is subject to Phosphoserine.

The protein belongs to the WD repeat PRL1/PRL2 family. Identified in the spliceosome C complex. Component of the PRP19-CDC5L splicing complex composed of a core complex comprising a homotetramer of PRPF19, CDC5L, PLRG1 and BCAS2, and at least three less stably associated proteins CTNNBL1, CWC15 and HSPA8. Interacts (via its WD40 repeat domain) directly with CDC5L (via its C-terminal); the interaction is required for mRNA splicing but not for spliceosome assembly. Component of the minor spliceosome, which splices U12-type introns. Within this complex, interacts with CRIPT. Also interacts directly in the complex with BCAS2 and PRPF19. Interacts with USB1.

The protein resides in the nucleus. It localises to the nucleus speckle. In terms of biological role, involved in pre-mRNA splicing as component of the spliceosome. Component of the PRP19-CDC5L complex that forms an integral part of the spliceosome and is required for activating pre-mRNA splicing. As a component of the minor spliceosome, involved in the splicing of U12-type introns in pre-mRNAs. The chain is Pleiotropic regulator 1 (Plrg1) from Mus musculus (Mouse).